Reading from the N-terminus, the 98-residue chain is NADH-ubiquinone oxidoreductase chain 4L (98 aa).

The next 3 helical transmembrane spans lie at 1 to 21, 29 to 49, and 61 to 81; these read MSLVHMNIALAFTVALLGLLM, SLLCLEGMMLTLFIMGTIMIL, and IILLVFAACEAAVGLSLLVMV.

Belongs to the complex I subunit 4L family. Core subunit of respiratory chain NADH dehydrogenase (Complex I) which is composed of 45 different subunits.

It is found in the mitochondrion inner membrane. The catalysed reaction is a ubiquinone + NADH + 5 H(+)(in) = a ubiquinol + NAD(+) + 4 H(+)(out). In terms of biological role, core subunit of the mitochondrial membrane respiratory chain NADH dehydrogenase (Complex I) which catalyzes electron transfer from NADH through the respiratory chain, using ubiquinone as an electron acceptor. Part of the enzyme membrane arm which is embedded in the lipid bilayer and involved in proton translocation. In Sorex unguiculatus (Long-clawed shrew), this protein is NADH-ubiquinone oxidoreductase chain 4L (MT-ND4L).